Consider the following 202-residue polypeptide: Small ribosomal subunit protein uS4c (202 aa).

The S4 RNA-binding domain maps to 90–153 (MRLDNIIFRL…KSEAIISKNI (64 aa)).

Belongs to the universal ribosomal protein uS4 family. In terms of assembly, part of the 30S ribosomal subunit. Contacts protein S5. The interaction surface between S4 and S5 is involved in control of translational fidelity.

Its subcellular location is the plastid. It localises to the chloroplast. One of the primary rRNA binding proteins, it binds directly to 16S rRNA where it nucleates assembly of the body of the 30S subunit. Functionally, with S5 and S12 plays an important role in translational accuracy. In Leucodon sciuroides (Moss), this protein is Small ribosomal subunit protein uS4c (rps4).